Here is a 155-residue protein sequence, read N- to C-terminus: Superoxide dismutase [Cu-Zn] (155 aa).

His-47, His-49, and His-64 together coordinate Cu cation. Cys-58 and Cys-147 are joined by a disulfide. 4 residues coordinate Zn(2+): His-64, His-72, His-81, and Asp-84. A Cu cation-binding site is contributed by His-121. Arg-144 is a binding site for substrate.

The protein belongs to the Cu-Zn superoxide dismutase family. In terms of assembly, homodimer. The cofactor is Cu cation. It depends on Zn(2+) as a cofactor.

Its subcellular location is the cytoplasm. It carries out the reaction 2 superoxide + 2 H(+) = H2O2 + O2. In terms of biological role, destroys radicals which are normally produced within the cells and which are toxic to biological systems. The protein is Superoxide dismutase [Cu-Zn] (SOD1) of Kluyveromyces lactis (strain ATCC 8585 / CBS 2359 / DSM 70799 / NBRC 1267 / NRRL Y-1140 / WM37) (Yeast).